Here is a 312-residue protein sequence, read N- to C-terminus: MRNGTVITEFILLGFPVIQGLQTPLFIAIFLTYILTLAGNGLIIATVWAEPRLQIPMYFFLCNLSFLEIWYTTTVIPKLLGTFVVARTVICMSCCLLQAFFHFFVGTTEFLILTIMSFDRYLTICNPLHHPTIMTSKLCLQLALSSWVVGFTIVFCQTMLLIQLPFCGNNVISHFYCDVGPSLKAACIDTSILELLGVIATILVIPGSLLFNMISYIYILSAILRIPSATGHQKTFSTCASHLTVVSLLYGAVLFMYLRPTAHSSFKINKVVSVLNTILTPLLNPFIYTIRNKEVKGALRKAMTCPKTGHAK.

Over 1-23 the chain is Extracellular; it reads MRNGTVITEFILLGFPVIQGLQT. An N-linked (GlcNAc...) asparagine glycan is attached at asparagine 3. A helical transmembrane segment spans residues 24–44; it reads PLFIAIFLTYILTLAGNGLII. Over 45-52 the chain is Cytoplasmic; it reads ATVWAEPR. A helical transmembrane segment spans residues 53–73; sequence LQIPMYFFLCNLSFLEIWYTT. At 74–97 the chain is on the extracellular side; the sequence is TVIPKLLGTFVVARTVICMSCCLL. A disulfide bridge links cysteine 95 with cysteine 187. A helical membrane pass occupies residues 98–118; that stretch reads QAFFHFFVGTTEFLILTIMSF. The Cytoplasmic portion of the chain corresponds to 119-137; that stretch reads DRYLTICNPLHHPTIMTSK. A helical membrane pass occupies residues 138-158; sequence LCLQLALSSWVVGFTIVFCQT. Over 159–195 the chain is Extracellular; it reads MLLIQLPFCGNNVISHFYCDVGPSLKAACIDTSILEL. The helical transmembrane segment at 196 to 215 threads the bilayer; the sequence is LGVIATILVIPGSLLFNMIS. The Cytoplasmic portion of the chain corresponds to 216–235; the sequence is YIYILSAILRIPSATGHQKT. Residues 236 to 256 traverse the membrane as a helical segment; sequence FSTCASHLTVVSLLYGAVLFM. At 257–269 the chain is on the extracellular side; sequence YLRPTAHSSFKIN. The chain crosses the membrane as a helical span at residues 270–290; the sequence is KVVSVLNTILTPLLNPFIYTI. The Cytoplasmic portion of the chain corresponds to 291-312; it reads RNKEVKGALRKAMTCPKTGHAK.

It belongs to the G-protein coupled receptor 1 family.

Its subcellular location is the cell membrane. In terms of biological role, odorant receptor. The sequence is that of Olfactory receptor 6X1 (OR6X1) from Homo sapiens (Human).